The primary structure comprises 382 residues: Glutamine synthetase cytosolic isozyme (382 aa).

Residues 36-118 form the GS beta-grasp domain; sequence GKICAEYVWI…VMCDCYEPPK (83 aa). The GS catalytic domain maps to 135-382; it reads TRFACAEVME…RLIVETTILL (248 aa).

It belongs to the glutamine synthetase family. As to quaternary structure, homooctamer.

It is found in the cytoplasm. The catalysed reaction is L-glutamate + NH4(+) + ATP = L-glutamine + ADP + phosphate + H(+). The sequence is that of Glutamine synthetase cytosolic isozyme (GLN1) from Chlamydomonas reinhardtii (Chlamydomonas smithii).